We begin with the raw amino-acid sequence, 935 residues long: Disintegrin and metalloproteinase domain-containing protein 22 (935 aa).

The first 24 residues, 1 to 24 (MHINGGPLASWICCVIGSIHLAHA), serve as a signal peptide directing secretion. Positions 25-227 (STRPENGGTS…QQTRSQRKKR (203 aa)) are excised as a propeptide. 2 N-linked (GlcNAc...) asparagine glycosylation sites follow: Asn167 and Asn210. At 228–736 (QTRRYPRNVE…NRDEGVISTN (509 aa)) the chain is on the extracellular side. A Peptidase M12B domain is found at 241 to 440 (KYVELMIVND…GGGACLFNKP (200 aa)). Disulfide bonds link Cys351-Cys435, Cys394-Cys419, Cys396-Cys403, Cys449-Cys479, Cys460-Cys476, Cys462-Cys468, Cys475-Cys496, Cys487-Cys493, Cys492-Cys518, Cys505-Cys525, Cys512-Cys544, Cys537-Cys549, Cys556-Cys607, Cys571-Cys637, Cys585-Cys595, Cys602-Cys665, and Cys659-Cys670. In terms of domain architecture, Disintegrin spans 446–533 (PPECGNGFVE…QCPANIHKLD (88 aa)). N-linked (GlcNAc...) asparagine glycosylation is present at Asn521. Asn609 and Asn636 each carry an N-linked (GlcNAc...) asparagine glycan. An N-linked (GlcNAc...) asparagine glycan is attached at Asn677. In terms of domain architecture, EGF-like spans 677 to 713 (NFSTCLGSTNKICSGHGVCSNEVRCICDRFWTGEDCS). 3 cysteine pairs are disulfide-bonded: Cys681-Cys695, Cys689-Cys701, and Cys703-Cys712. Residues 737-757 (IIIGAIAGTILVLALVLGITA) traverse the membrane as a helical segment. The Cytoplasmic segment spans residues 758 to 935 (WGYKNYRRER…QSARLWETSI (178 aa)). Residues 850–935 (VSDVCENGRP…QSARLWETSI (86 aa)) form a disordered region. Polar residues predominate over residues 859 to 870 (PRSNSWQGNVTS). A compositionally biased stretch (basic residues) spans 871 to 882 (SRKKLRGKRFRP). Low complexity predominate over residues 891 to 906 (SPAKSPSSSTGSIASS).

In terms of processing, the precursor is cleaved by a furin endopeptidase. In terms of tissue distribution, low levels in adult tissues. Not detected in developing embryos.

The protein resides in the cell membrane. Probable ligand for integrin in the brain. This is a non catalytic metalloprotease-like protein. The sequence is that of Disintegrin and metalloproteinase domain-containing protein 22 (adam22) from Xenopus laevis (African clawed frog).